Reading from the N-terminus, the 135-residue chain is Large ribosomal subunit protein uL18 (135 aa).

The interval 1-25 (MAQTENQKSKRIPLGKDVSTQRRLS) is disordered.

Belongs to the universal ribosomal protein uL18 family. As to quaternary structure, part of the 50S ribosomal subunit; part of the 5S rRNA/L5/L18/L25 subcomplex. Contacts the 5S and 23S rRNAs.

Functionally, this is one of the proteins that bind and probably mediate the attachment of the 5S RNA into the large ribosomal subunit, where it forms part of the central protuberance. The polypeptide is Large ribosomal subunit protein uL18 (Nocardia farcinica (strain IFM 10152)).